The sequence spans 425 residues: Formyl-CoA:oxalate CoA-transferase (425 aa).

CoA is bound by residues 17 to 18 (QS), Arg-38, 72 to 75 (LDTK), 96 to 98 (NFG), Arg-104, and 136 to 139 (KVYE). Asp-168 functions as the Nucleophile in the catalytic mechanism. 247–249 (GGQ) provides a ligand contact to substrate.

It belongs to the CoA-transferase III family. Frc subfamily. In terms of assembly, homodimer.

The enzyme catalyses formyl-CoA + oxalate = oxalyl-CoA + formate. The protein operates within metabolic intermediate degradation; oxalate degradation; CO(2) and formate from oxalate: step 1/2. In terms of biological role, involved in the catabolism of oxalate and in the adapatation to low pH via the induction of the oxalate-dependent acid tolerance response (ATR). Catalyzes the transfer of the CoA moiety from formyl-CoA to oxalate. This chain is Formyl-CoA:oxalate CoA-transferase, found in Bradyrhizobium diazoefficiens (strain JCM 10833 / BCRC 13528 / IAM 13628 / NBRC 14792 / USDA 110).